Consider the following 438-residue polypeptide: Aminopeptidase E (438 aa).

Residues Cys-70, His-362, and Asn-383 contribute to the active site.

It belongs to the peptidase C1 family.

The protein localises to the cytoplasm. Functionally, can hydrolyze internal peptide bonds in Met-enkephalin and bradykinin; however, hydrolysis of alpha-, beta-, and kappa-caseins is not detected. This chain is Aminopeptidase E (pepE), found in Lactobacillus helveticus (Lactobacillus suntoryeus).